The primary structure comprises 199 residues: Recombination protein RecR (199 aa).

The C4-type zinc finger occupies 57–72 (CSSCRTFTEESLCPIC). The 96-residue stretch at 81-176 (DLICVVETPA…NVSRIAHGVP (96 aa)) folds into the Toprim domain.

Belongs to the RecR family.

In terms of biological role, may play a role in DNA repair. It seems to be involved in an RecBC-independent recombinational process of DNA repair. It may act with RecF and RecO. The sequence is that of Recombination protein RecR from Shewanella loihica (strain ATCC BAA-1088 / PV-4).